Reading from the N-terminus, the 395-residue chain is Flap endonuclease 1 (395 aa).

Positions 1–104 are N-domain; the sequence is MGIKHLFQVI…GELAKRTARK (104 aa). Asp34 provides a ligand contact to Mg(2+). 2 residues coordinate DNA: Arg47 and Arg70. Asp86 contributes to the Mg(2+) binding site. A disordered region spans residues 102–121; that stretch reads ARKAEATEAHEEAKETGTAE. The interval 122–253 is I-domain; the sequence is DVEKFSRRTV…NTALKLIREH (132 aa). Glu158, Glu160, Asp179, and Asp181 together coordinate Mg(2+). Glu158 contacts DNA. Residues Gly231 and Asp233 each coordinate DNA. Residue Asp233 participates in Mg(2+) binding. The interval 341 to 349 is interaction with PCNA; the sequence is QQSRLEGFF. A disordered region spans residues 348–395; the sequence is FFKPVARTDEEKASLKRKHDEKLQEQKKRKKEEAKAKKEAKAKPRGAA. The segment covering 353–389 has biased composition (basic and acidic residues); it reads ARTDEEKASLKRKHDEKLQEQKKRKKEEAKAKKEAKA.

The protein belongs to the XPG/RAD2 endonuclease family. FEN1 subfamily. Interacts with PCNA. Three molecules of fen1 bind to one PCNA trimer with each molecule binding to one PCNA monomer. PCNA stimulates the nuclease activity without altering cleavage specificity. Mg(2+) serves as cofactor. In terms of processing, phosphorylated. Phosphorylation upon DNA damage induces relocalization to the nuclear plasma.

It is found in the nucleus. It localises to the nucleolus. Its subcellular location is the nucleoplasm. The protein resides in the mitochondrion. Functionally, structure-specific nuclease with 5'-flap endonuclease and 5'-3' exonuclease activities involved in DNA replication and repair. During DNA replication, cleaves the 5'-overhanging flap structure that is generated by displacement synthesis when DNA polymerase encounters the 5'-end of a downstream Okazaki fragment. It enters the flap from the 5'-end and then tracks to cleave the flap base, leaving a nick for ligation. Also involved in the long patch base excision repair (LP-BER) pathway, by cleaving within the apurinic/apyrimidinic (AP) site-terminated flap. Acts as a genome stabilization factor that prevents flaps from equilibrating into structures that lead to duplications and deletions. Also possesses 5'-3' exonuclease activity on nicked or gapped double-stranded DNA, and exhibits RNase H activity. Also involved in replication and repair of rDNA and in repairing mitochondrial DNA. In Aspergillus fumigatus (strain CBS 144.89 / FGSC A1163 / CEA10) (Neosartorya fumigata), this protein is Flap endonuclease 1 (fen1).